Consider the following 100-residue polypeptide: Ubiquitin-related modifier 1 homolog (100 aa).

Gly-100 is modified (1-thioglycine). Residue Gly-100 forms a Glycyl lysine isopeptide (Gly-Lys) (interchain with K-? in acceptor proteins) linkage.

The protein belongs to the URM1 family. C-terminal thiocarboxylation occurs in 2 steps, it is first acyl-adenylated (-COAMP) via the hesA/moeB/thiF part of the MOCS3 homolog, then thiocarboxylated (-COSH) via the rhodanese domain of the MOCS3 homolog.

The protein resides in the cytoplasm. The protein operates within tRNA modification; 5-methoxycarbonylmethyl-2-thiouridine-tRNA biosynthesis. Its function is as follows. Acts as a sulfur carrier required for 2-thiolation of mcm(5)S(2)U at tRNA wobble positions of cytosolic tRNA(Lys), tRNA(Glu) and tRNA(Gln). Serves as sulfur donor in tRNA 2-thiolation reaction by being thiocarboxylated (-COSH) at its C-terminus by MOCS3. The sulfur is then transferred to tRNA to form 2-thiolation of mcm(5)S(2)U. Also acts as a ubiquitin-like protein (UBL) that is covalently conjugated via an isopeptide bond to lysine residues of target proteins. The thiocarboxylated form serves as substrate for conjugation and oxidative stress specifically induces the formation of UBL-protein conjugates. This is Ubiquitin-related modifier 1 homolog from Oryza sativa subsp. japonica (Rice).